The following is a 185-amino-acid chain: Ribosome-recycling factor (185 aa).

Belongs to the RRF family.

Its subcellular location is the cytoplasm. Its function is as follows. Responsible for the release of ribosomes from messenger RNA at the termination of protein biosynthesis. May increase the efficiency of translation by recycling ribosomes from one round of translation to another. The polypeptide is Ribosome-recycling factor (Teredinibacter turnerae (strain ATCC 39867 / T7901)).